The primary structure comprises 339 residues: Anthranilate phosphoribosyltransferase (339 aa).

Residues G80, G83–D84, T88, N90–T93, K108–S116, and S120 contribute to the 5-phospho-alpha-D-ribose 1-diphosphate site. Anthranilate is bound at residue G80. Mg(2+) is bound at residue S92. Position 111 (N111) interacts with anthranilate. R166 provides a ligand contact to anthranilate. Mg(2+) is bound by residues D225 and E226.

The protein belongs to the anthranilate phosphoribosyltransferase family. As to quaternary structure, homodimer. It depends on Mg(2+) as a cofactor.

The enzyme catalyses N-(5-phospho-beta-D-ribosyl)anthranilate + diphosphate = 5-phospho-alpha-D-ribose 1-diphosphate + anthranilate. Its pathway is amino-acid biosynthesis; L-tryptophan biosynthesis; L-tryptophan from chorismate: step 2/5. Catalyzes the transfer of the phosphoribosyl group of 5-phosphorylribose-1-pyrophosphate (PRPP) to anthranilate to yield N-(5'-phosphoribosyl)-anthranilate (PRA). In Chloroflexus aurantiacus (strain ATCC 29366 / DSM 635 / J-10-fl), this protein is Anthranilate phosphoribosyltransferase.